The chain runs to 212 residues: Thiamine-phosphate synthase (212 aa).

4-amino-2-methyl-5-(diphosphooxymethyl)pyrimidine is bound by residues 39–43 (QLREK) and N71. D72 and D91 together coordinate Mg(2+). Position 110 (S110) interacts with 4-amino-2-methyl-5-(diphosphooxymethyl)pyrimidine. 137–139 (TPT) contributes to the 2-[(2R,5Z)-2-carboxy-4-methylthiazol-5(2H)-ylidene]ethyl phosphate binding site. K140 contacts 4-amino-2-methyl-5-(diphosphooxymethyl)pyrimidine. G168 provides a ligand contact to 2-[(2R,5Z)-2-carboxy-4-methylthiazol-5(2H)-ylidene]ethyl phosphate.

This sequence belongs to the thiamine-phosphate synthase family. The cofactor is Mg(2+).

It carries out the reaction 2-[(2R,5Z)-2-carboxy-4-methylthiazol-5(2H)-ylidene]ethyl phosphate + 4-amino-2-methyl-5-(diphosphooxymethyl)pyrimidine + 2 H(+) = thiamine phosphate + CO2 + diphosphate. The enzyme catalyses 2-(2-carboxy-4-methylthiazol-5-yl)ethyl phosphate + 4-amino-2-methyl-5-(diphosphooxymethyl)pyrimidine + 2 H(+) = thiamine phosphate + CO2 + diphosphate. It catalyses the reaction 4-methyl-5-(2-phosphooxyethyl)-thiazole + 4-amino-2-methyl-5-(diphosphooxymethyl)pyrimidine + H(+) = thiamine phosphate + diphosphate. Its pathway is cofactor biosynthesis; thiamine diphosphate biosynthesis; thiamine phosphate from 4-amino-2-methyl-5-diphosphomethylpyrimidine and 4-methyl-5-(2-phosphoethyl)-thiazole: step 1/1. Condenses 4-methyl-5-(beta-hydroxyethyl)thiazole monophosphate (THZ-P) and 2-methyl-4-amino-5-hydroxymethyl pyrimidine pyrophosphate (HMP-PP) to form thiamine monophosphate (TMP). The protein is Thiamine-phosphate synthase of Acidothermus cellulolyticus (strain ATCC 43068 / DSM 8971 / 11B).